Here is a 706-residue protein sequence, read N- to C-terminus: MPSAPSTPPSKRKSKFAGFGKFFKPWKWRKRKSSDSFRETSEVLERKISMRKPREELVKRGLLVEVPEEDVSIPSESPPLRNGHMSVEHANPPEDIGGLKRKTRQDSTGSRPKSGETTVQPCATAEVAPVEPCTATEVASVQPHATAEVAPIQPLATAEVSPVQHCATAEVAPVQPRPVSEVASVQPCPVSEVVPVHPRHLSEKNSEKYRPMSEVAPGASRPTSEVAPLQKVSRDFSKQPLLPPKRPLSSSSSVTQESVLGGQKPDPSTRQQSSVPVPTPRTIHPLPFSKQPPVPPPKPQNRSSNPLMAELSLALGGSTLSPAGSRPSPPIPPKRVVVPSTDAVNNKEKALRPASLPPIPANEISIPSPPSPPISSHIPVSNPPVPMLTLAPPNTEVEKEQSASPLPLHIRIQQALNSPQPLPLLDSSQRAQSLLFMQNEVPSEEGTRVRSLPVTIELLKVPDDDDDDNSLEDESLSPESSESHPSRVYIGDVPSVTVIPNYLPTCVQEEEEEEEEGVSDTDSEGPVLYREDDEEEEEEETSSLANKVKRKDTLAMKLSGRMGPHDSNPEFPQRSREEWNQIRQQIGSQLNRRLSQRPSAEELEQRNILQKNEADRLAEKKEIKRRLTRKLSQRPTVAELVERKILRFNEYVEVTDAHDYDRRADKPWTRLTPADKAAIRKELNEFKSTEMAVHEESKHFTRFHRP.

Residues 42–67 (EVLERKISMRKPREELVKRGLLVEVP) form an RPEL 1 repeat. Disordered regions lie at residues 65 to 123 (EVPE…QPCA), 196 to 380 (VHPR…HIPV), 385 to 404 (VPMLTLAPPNTEVEKEQSAS), and 459 to 579 (LKVP…REEW). Residues 106–121 (DSTGSRPKSGETTVQP) show a composition bias toward polar residues. Basic and acidic residues predominate over residues 200–211 (HLSEKNSEKYRP). Residues 266 to 276 (DPSTRQQSSVP) show a composition bias toward polar residues. Residues 290 to 299 (KQPPVPPPKP) show a composition bias toward pro residues. Acidic residues-rich tracts occupy residues 463–476 (DDDDDDNSLEDESL), 508–523 (QEEEEEEEEGVSDTDS), and 531–541 (EDDEEEEEEET). Residues 563 to 579 (GPHDSNPEFPQRSREEW) are compositionally biased toward basic and acidic residues. RPEL repeat units lie at residues 588-613 (SQLNRRLSQRPSAEELEQRNILQKNE) and 625-650 (RRLTRKLSQRPTVAELVERKILRFNE).

The protein belongs to the phosphatase and actin regulator family. In terms of assembly, binds ppp1ca and actin.

Its subcellular location is the cytoplasm. It localises to the cell projection. It is found in the lamellipodium. In terms of biological role, regulator of protein phosphatase 1 (PP1) required for neural tube and optic fissure closure, and enteric neural crest cell (ENCCs) migration during development. Acts as an activator of PP1. During neural tube closure, localizes to the ventral neural tube and activates PP1, leading to down-regulate cell proliferation within cranial neural tissue and the neural retina. Also acts as a regulator of migration of enteric neural crest cells (ENCCs) by activating PP1, leading to repression of the integrin signaling through the rho/rock pathway. The sequence is that of Phosphatase and actin regulator 4 (phactr4) from Xenopus tropicalis (Western clawed frog).